The primary structure comprises 1130 residues: Putative protein tag-278 (1130 aa).

Disordered stretches follow at residues 1–92 (MSRS…DIDN), 104–129 (VARE…ELKR), and 974–1130 (NELI…AWKF). 2 coiled-coil regions span residues 121–779 (AGRE…EEIK) and 805–1061 (EERE…ARAK). Residues 983–993 (RQTDESTSEPH) are compositionally biased toward basic and acidic residues. Polar residues predominate over residues 999-1011 (SITSHGVFQNFVS). Basic and acidic residues-rich tracts occupy residues 1013–1057 (MKDK…EKSP) and 1068–1081 (RLRD…KSDN). A compositionally biased stretch (low complexity) spans 1082–1095 (LESTPSSSSRNLLS). A compositionally biased stretch (basic and acidic residues) spans 1116 to 1130 (TKKDSSSEKRPAWKF).

This chain is Putative protein tag-278 (tag-278), found in Caenorhabditis elegans.